The sequence spans 316 residues: Actinorhodin polyketide synthase bifunctional cyclase/dehydratase (316 aa).

It participates in antibiotic biosynthesis; actinorhodin biosynthesis. Its function is as follows. Is needed for correct cyclization of the oligoketide leading to isochromanequinone formation. This chain is Actinorhodin polyketide synthase bifunctional cyclase/dehydratase, found in Streptomyces coelicolor (strain ATCC BAA-471 / A3(2) / M145).